The primary structure comprises 469 residues: UTP--glucose-1-phosphate uridylyltransferase 2 (469 aa).

Alanine 2 bears the N-acetylalanine mark. UTP contacts are provided by residues 85–88 (LNGG), lysine 99, glutamine 162, and glycine 191. Residue 87–88 (GG) coordinates substrate. Substrate-binding positions include histidine 192 and 220–222 (NSD). UTP-binding residues include aspartate 222 and lysine 360.

This sequence belongs to the UDPGP type 1 family. In terms of tissue distribution, expressed in cauline leaves, flowers and siliques.

The protein localises to the cytoplasm. The enzyme catalyses alpha-D-glucose 1-phosphate + UTP + H(+) = UDP-alpha-D-glucose + diphosphate. Functionally, converts glucose 1-phosphate to UDP-glucose, which is the major glycosyl donor for polysaccharides. Acts redundantly with UGP1 and is essential for the synthesis of sucrose, starch and cell wall, and callose deposition. The polypeptide is UTP--glucose-1-phosphate uridylyltransferase 2 (Arabidopsis thaliana (Mouse-ear cress)).